We begin with the raw amino-acid sequence, 420 residues long: Aminoacyltransferase FemA (420 aa).

This sequence belongs to the FemABX family. Homodimer. Interacts with FemB.

The protein resides in the cytoplasm. It catalyses the reaction beta-D-GlcNAc-(1-&gt;4)-Mur2Ac(oyl-L-Ala-D-isoglutaminyl-L-Lys-(N(6)-Gly)-D-Ala-D-Ala)-di-trans,octa-cis-undecaprenyl diphosphate + 2 glycyl-tRNA(Gly) = MurNAc-L-Ala-D-isoglutaminyl-L-Lys-(N(6)-tri-Gly)-D-Ala-D-Ala-diphospho-di-trans,octa-cis-undecaprenyl-GlcNAc + 2 tRNA(Gly) + 2 H(+). Its function is as follows. Catalyzes the formation of the pentaglycine interpeptide bridge, which is characteristic of the S.aureus peptidoglycan. Adds glycines 2 and 3 of the pentaglycine bridge, using glycyl-tRNA(Gly) as donor. Involved in resistance to methicillin. This Staphylococcus aureus (strain NCTC 8325 / PS 47) protein is Aminoacyltransferase FemA (femA).